Reading from the N-terminus, the 228-residue chain is ATP-dependent dethiobiotin synthetase BioD (228 aa).

12 to 17 (EIGKTT) contributes to the ATP binding site. Residue T16 coordinates Mg(2+). The active site involves K37. A substrate-binding site is contributed by S41. Residues D54, 116-119 (EGAG), and 205-207 (PRL) each bind ATP. Mg(2+) contacts are provided by D54 and E116.

The protein belongs to the dethiobiotin synthetase family. As to quaternary structure, homodimer. Requires Mg(2+) as cofactor.

Its subcellular location is the cytoplasm. The catalysed reaction is (7R,8S)-7,8-diammoniononanoate + CO2 + ATP = (4R,5S)-dethiobiotin + ADP + phosphate + 3 H(+). It functions in the pathway cofactor biosynthesis; biotin biosynthesis; biotin from 7,8-diaminononanoate: step 1/2. Functionally, catalyzes a mechanistically unusual reaction, the ATP-dependent insertion of CO2 between the N7 and N8 nitrogen atoms of 7,8-diaminopelargonic acid (DAPA, also called 7,8-diammoniononanoate) to form a ureido ring. The chain is ATP-dependent dethiobiotin synthetase BioD from Pseudomonas aeruginosa (strain ATCC 15692 / DSM 22644 / CIP 104116 / JCM 14847 / LMG 12228 / 1C / PRS 101 / PAO1).